A 116-amino-acid polypeptide reads, in one-letter code: Appetite-regulating hormone (116 aa).

The N-terminal stretch at 1–23 is a signal peptide; the sequence is MPAPRTICSLLLLSMLWMDLAMA. Residue serine 26 is the site of O-decanoyl serine; alternate attachment. Serine 26 carries O-hexanoyl serine; alternate lipidation. Serine 26 carries the O-octanoyl serine; alternate lipid modification. The interval 29 to 67 is disordered; sequence SPEHQKLQRKEPKKPSGRLKPRALEGQFDPDVGSQEEGA. Positions 31–42 are enriched in basic and acidic residues; the sequence is EHQKLQRKEPKK. The propeptide at 51-74 is removed in mature form; that stretch reads ALEGQFDPDVGSQEEGAEDELEIR. Position 97 is a leucine amide (leucine 97). A propeptide spans 98–116 (removed in mature form); that stretch reads GKFLQDILWEEAEETLADE.

This sequence belongs to the motilin family. In terms of processing, O-octanoylated by GOAT/MBOAT4. O-octanoylation is essential for ghrelin activity. Amidation of Leu-97 is essential for obestatin activity.

The protein localises to the secreted. Functionally, ghrelin is the ligand for growth hormone secretagogue receptor type 1 (GHSR). Induces the release of growth hormone from the pituitary. Has an appetite-stimulating effect, induces adiposity and stimulates gastric acid secretion. Involved in growth regulation. Its function is as follows. Obestatin may be the ligand for GPR39. May have an appetite-reducing effect resulting in decreased food intake. May reduce gastric emptying activity and jejunal motility. The polypeptide is Appetite-regulating hormone (GHRL) (Capra hircus (Goat)).